The following is a 156-amino-acid chain: Ribosome maturation factor RimP (156 aa).

This sequence belongs to the RimP family.

The protein localises to the cytoplasm. Required for maturation of 30S ribosomal subunits. This chain is Ribosome maturation factor RimP, found in Prochlorococcus marinus (strain NATL2A).